Consider the following 79-residue polypeptide: MKVAIIFLLSALALLSLAGNPPAEVNGKTPNCPKQIMGCPRIYDPVCGTNGITYPSECSLCFENRKFGTSIHIQRRGTC.

The signal sequence occupies residues 1–18 (MKVAIIFLLSALALLSLA). A Kazal-like domain is found at 26–79 (NGKTPNCPKQIMGCPRIYDPVCGTNGITYPSECSLCFENRKFGTSIHIQRRGTC). 3 disulfides stabilise this stretch: Cys32–Cys61, Cys39–Cys58, and Cys47–Cys79.

It is found in the secreted. Its function is as follows. Serine protease inhibitor which exhibits anti-trypsin activity. In the pancreas, protects against trypsin-catalyzed premature activation of zymogens. Functionally, in the male reproductive tract, binds to sperm heads where it modulates sperm capacitance by inhibiting calcium uptake and nitrogen oxide (NO) production. This Rattus norvegicus (Rat) protein is Serine protease inhibitor Kazal-type 1.